The sequence spans 436 residues: Probable mediator of RNA polymerase II transcription subunit 26b (436 aa).

Residues 71–111 form a disordered region; sequence PGDDEANRGTTGNGGGGTAVDEDYEVAGGSKESKANSSRGD. The region spanning 139-214 is the TFIIS N-terminal domain; it reads KEVARIKEIL…AEWKELVDQW (76 aa). Residues 263–376 form a disordered region; the sequence is HFFDSLDFDG…PQQEKLKGLD (114 aa). 2 stretches are compositionally biased toward basic and acidic residues: residues 276–290 and 332–350; these read NSEEHNTSREHERRP and TEQRMKNETVSVHKSEKPM. Positions 382–402 form a coiled coil; it reads EFAKRKLQESYQHHENAKKQR. A disordered region spans residues 408–436; sequence EMIPKQGSAQKPQLKRPGMSNRNWANGRK. Residues 427–436 are compositionally biased toward polar residues; the sequence is SNRNWANGRK.

This sequence belongs to the Mediator complex subunit 26 family. Component of the Mediator complex.

The protein localises to the nucleus. In terms of biological role, component of the Mediator complex, a coactivator involved in the regulated transcription of nearly all RNA polymerase II-dependent genes. Mediator functions as a bridge to convey information from gene-specific regulatory proteins to the basal RNA polymerase II transcription machinery. The Mediator complex, having a compact conformation in its free form, is recruited to promoters by direct interactions with regulatory proteins and serves for the assembly of a functional preinitiation complex with RNA polymerase II and the general transcription factors. May play a role in transcription elongation. In Arabidopsis thaliana (Mouse-ear cress), this protein is Probable mediator of RNA polymerase II transcription subunit 26b (MED26B).